Consider the following 376-residue polypeptide: Chaperone protein DnaJ (376 aa).

The J domain occupies 5-70 (DYYEVLGVAR…NKRRMYDSHG (66 aa)). A CR-type zinc finger spans residues 132–209 (GVERRIEIPT…CHGNGRVEED (78 aa)). The Zn(2+) site is built by Cys-145, Cys-148, Cys-161, Cys-164, Cys-183, Cys-186, Cys-197, and Cys-200. CXXCXGXG motif repeat units lie at residues 145–152 (CGDCDGSG), 161–168 (CNVCHGRG), 183–190 (CHNCGGRG), and 197–204 (CKTCHGNG). The interval 223-242 (GDRIRLSGEGEAGPAGTPPG) is disordered.

It belongs to the DnaJ family. Homodimer. Zn(2+) is required as a cofactor.

It is found in the cytoplasm. Functionally, participates actively in the response to hyperosmotic and heat shock by preventing the aggregation of stress-denatured proteins and by disaggregating proteins, also in an autonomous, DnaK-independent fashion. Unfolded proteins bind initially to DnaJ; upon interaction with the DnaJ-bound protein, DnaK hydrolyzes its bound ATP, resulting in the formation of a stable complex. GrpE releases ADP from DnaK; ATP binding to DnaK triggers the release of the substrate protein, thus completing the reaction cycle. Several rounds of ATP-dependent interactions between DnaJ, DnaK and GrpE are required for fully efficient folding. Also involved, together with DnaK and GrpE, in the DNA replication of plasmids through activation of initiation proteins. The chain is Chaperone protein DnaJ from Stenotrophomonas maltophilia (strain R551-3).